A 20-amino-acid polypeptide reads, in one-letter code: Agglutinin beta-3 chain (20 aa).

It belongs to the jacalin lectin family. As to quaternary structure, tetramer of four alpha chains associated with two or four beta chains.

Functionally, D-galactose-specific lectin, binds the T-antigen structure Gal-beta1,3-GalNAc (Thomsen-Friedenreich-antigen-specific lectin). Potent and selective stimulant of distinct T- and B-cell functions. Shows a unique ability to specifically recognize IgA-1 from human serum. This chain is Agglutinin beta-3 chain, found in Artocarpus integer (Jack fruit).